The following is a 96-amino-acid chain: Co-chaperonin GroES (96 aa).

It belongs to the GroES chaperonin family. In terms of assembly, heptamer of 7 subunits arranged in a ring. Interacts with the chaperonin GroEL.

It is found in the cytoplasm. Its function is as follows. Together with the chaperonin GroEL, plays an essential role in assisting protein folding. The GroEL-GroES system forms a nano-cage that allows encapsulation of the non-native substrate proteins and provides a physical environment optimized to promote and accelerate protein folding. GroES binds to the apical surface of the GroEL ring, thereby capping the opening of the GroEL channel. The chain is Co-chaperonin GroES from Wolbachia sp. subsp. Brugia malayi (strain TRS).